The chain runs to 276 residues: Aurora kinase C (276 aa).

The Protein kinase domain maps to 16-266 (FEIGRPLGRG…LAQVLKHPWV (251 aa)). ATP-binding positions include 22 to 30 (LGRGKFGRV) and Lys-45. Asp-139 acts as the Proton acceptor in catalysis. At Thr-171 the chain carries Phosphothreonine; by PKA.

This sequence belongs to the protein kinase superfamily. Ser/Thr protein kinase family. Aurora subfamily. In terms of assembly, component of the chromosomal passenger complex (CPC) composed of at least BIRC5/survivin, CDCA8/borealin, INCENP, AURKB or AURKC; predominantly independent AURKB- and AURKC-containing complexes exist; in the complex interacts directly with BIRC5/survivin and INCENP. Interacts with TACC1. In terms of tissue distribution, expressed only in testis.

It localises to the nucleus. The protein resides in the chromosome. It is found in the centromere. Its subcellular location is the cytoplasm. The protein localises to the cytoskeleton. It localises to the spindle. The enzyme catalyses L-seryl-[protein] + ATP = O-phospho-L-seryl-[protein] + ADP + H(+). It carries out the reaction L-threonyl-[protein] + ATP = O-phospho-L-threonyl-[protein] + ADP + H(+). Its activity is regulated as follows. Okadaic acid, an inhibitor of protein phosphatase 1 (PP1), protein phosphatase 2A (PP2A) and protein phosphatase 5 (PP5), increases AURKC activity. AURKC is also stabilized through its interaction with INCENP, which also acts as an activator. Functionally, serine/threonine-protein kinase component of the chromosomal passenger complex (CPC), a complex that acts as a key regulator of mitosis. The CPC complex has essential functions at the centromere in ensuring correct chromosome alignment and segregation and is required for chromatin-induced microtubule stabilization and spindle assembly. Also plays a role in meiosis and more particularly in spermatogenesis. Has redundant cellular functions with AURKB and can rescue an AURKB knockdown. Like AURKB, AURKC phosphorylates histone H3 at 'Ser-10' and 'Ser-28'. AURKC phosphorylates the CPC complex subunits BIRC5/survivin and INCENP leading to increased AURKC activity. Phosphorylates TACC1, another protein involved in cell division, at 'Ser-228'. The chain is Aurora kinase C (Aurkc) from Mus musculus (Mouse).